The primary structure comprises 124 residues: Group 1 truncated hemoglobin GlbN (124 aa).

3 residues coordinate heme: His-46, His-70, and His-117.

It belongs to the truncated hemoglobin family. Group I subfamily. In terms of assembly, monomer. The cofactor is heme.

Functionally, forms a very stable complex with oxygen. The oxygen dissociation rate is 0.011 sec(-1). This is Group 1 truncated hemoglobin GlbN (glbN) from Synechocystis sp. (strain ATCC 27184 / PCC 6803 / Kazusa).